We begin with the raw amino-acid sequence, 64 residues long: Putative antitoxin MJ0975 (64 aa).

It belongs to the UPF0165 family.

Functionally, possibly the antitoxin component of a type II toxin-antitoxin (TA) system. Its cognate toxin is VapC2 (Potential). This is Putative antitoxin MJ0975 (vapB2) from Methanocaldococcus jannaschii (strain ATCC 43067 / DSM 2661 / JAL-1 / JCM 10045 / NBRC 100440) (Methanococcus jannaschii).